We begin with the raw amino-acid sequence, 580 residues long: Probable inositol transporter 2 (580 aa).

12 consecutive transmembrane segments (helical) span residues 36 to 56 (GIGGLLFGYDTGVISGALLYI), 71 to 91 (EMIVSMAVAGAIVGAAIGGWA), 106 to 126 (FLFLLGAIIMAAAPNPSLLVV), 129 to 149 (VFVGLGVGMASMTAPLYISEA), 156 to 176 (GALVSTNGFLITGGQFLSYLI), 189 to 209 (WMLGIAGIPALLQFVLMFTLP), 275 to 295 (GLIAGVGLQVFQQFVGINTVM), 315 to 335 (LLSLVTAGLNAFGSIISIYFI), 343 to 363 (LLIISLFGVIISLGILTGVFY), 452 to 472 (FGWFALLGLGLYIIFFSPGMG), 490 to 510 (ICGGIAATANWISNLIVAQSF), and 521 to 541 (WTFLIFGVISVIALLFVMVCV).

Belongs to the major facilitator superfamily. Sugar transporter (TC 2.A.1.1) family. As to expression, expressed in the tapetum, but not in pollen grains. Detected in leaf vascular tissue and in roots.

The protein resides in the cell membrane. Inhibited by nickel and to a lesser extent by cobalt. In terms of biological role, plasma membrane inositol-proton symporter. Specific for several inositol epimers, such as myoinositol and scylloinositol. D-chiroinositol, mucoinositol, alloinositol and pinitol are also transported with a lower activity. Not active with galactinol and phytate. The protein is Probable inositol transporter 2 (INT2) of Arabidopsis thaliana (Mouse-ear cress).